We begin with the raw amino-acid sequence, 400 residues long: Argininosuccinate synthase (400 aa).

10–18 (AFSGGLDTT) serves as a coordination point for ATP. Position 87 (tyrosine 87) interacts with L-citrulline. Glycine 117 contributes to the ATP binding site. L-aspartate contacts are provided by threonine 119, asparagine 123, and aspartate 124. Asparagine 123 is an L-citrulline binding site. Positions 127, 173, 182, 255, and 267 each coordinate L-citrulline.

Belongs to the argininosuccinate synthase family. Type 1 subfamily. In terms of assembly, homotetramer.

It localises to the cytoplasm. The enzyme catalyses L-citrulline + L-aspartate + ATP = 2-(N(omega)-L-arginino)succinate + AMP + diphosphate + H(+). Its pathway is amino-acid biosynthesis; L-arginine biosynthesis; L-arginine from L-ornithine and carbamoyl phosphate: step 2/3. The protein is Argininosuccinate synthase of Natronomonas pharaonis (strain ATCC 35678 / DSM 2160 / CIP 103997 / JCM 8858 / NBRC 14720 / NCIMB 2260 / Gabara) (Halobacterium pharaonis).